The primary structure comprises 739 residues: MDRGTRRIWVSQNQGDTDLDYHKILTAGLTVQQGIVRQKIISVYLVDNLEAMCQLVIQAFEAGIDFQENADSFLLMLCLHHAYQGDYKLFLESNAVQYLEGHGFKFELRKKDGVNRLEELLPAATSGKNIRRTLAALPEEETTEANAGQFLSFASLFLPKLVVGEKACLEKVQRQIQVHAEQGLIQYPTAWQSVGHMMVIFRLMRTNFLIKYLLIHQGMHMVAGHDANDAVIANSVAQARFSGLLIVKTVLDHILQKTDQGVRLHPLARTAKVRNEVNAFKAALSSLAKHGEYAPFARLLNLSGVNNLEHGLYPQLSAIALGVATAHGSTLAGVNVGEQYQQLREAATEAEKQLQQYAESRELDSLGLDDQERRILMNFHQKKNEISFQQTNAMVTLRKERLAKLTEAITLASRPNLGSRQDDGNEIPFPGPISNNPDQDHLEDDPRDSRDTIIPNGAIDPEDGDFENYNGYHDDEVGTAGDLVLFDLDDHEDDNKAFEPQDSSPQSQREIERERLIHPPPGNNKDDNRASDNNQQSADSEEQGGQYNWHRGPERTTANRRLSPVHEEDTLMDQGDDDPSSLPPLESDDDDASSSQQDPDYTAVAPPAPVYRSAEAHEPPHKSSNEPAETSQLNEDPDIGQSKSMQKLEETYHHLLRTQGPFEAINYYHMMKDEPVIFSTDDGKEYTYPDSLEEAYPPWLTEKERLDKENRYIYINNQQFFWPVMSPRDKFLAILQHHQ.

Positions 334–363 (VNVGEQYQQLREAATEAEKQLQQYAESREL) form a coiled coil. Disordered stretches follow at residues 414-475 (RPNL…YHDD) and 493-641 (DDNK…DIGQ). The segment covering 531-546 (SDNNQQSADSEEQGGQ) has biased composition (polar residues). Positions 570 to 579 (TLMDQGDDDP) are enriched in acidic residues. The span at 614-624 (AEAHEPPHKSS) shows a compositional bias: basic and acidic residues. Over residues 625-634 (NEPAETSQLN) the composition is skewed to polar residues.

This sequence belongs to the filoviruses nucleoprotein family. In terms of assembly, homooligomer. Homomultimerizes to form the nucleocapsid. Binds to viral genomic RNA. Interacts with VP35 and VP30 to form the nucleocapsid. Interacts with host PPP2R5C; this interaction leads to VP30 dephosphorylation and viral transcription. Interacts with VP24; this interaction facilitates nucleocapsid assembly and genome packaging. Interacts with matrix protein VP40; this interaction allows recruitment of the nucleocapsid into progeny virions. Interacts with host STAU1. Interacts with host NXF1 (via RNA-binding domain); this interaction recruits NXF1 to the inclusion bodies were viral replication takes place, probably to export viral mRNA-NXF1 complexes from these sites. Interacts with host CCDC92; this interaction sequesters NP in the host cytoplasm. Interacts with host TRIM14. Phosphorylated and O-glycosylated by host. Acetylated by host EP300 in vitro.

The protein localises to the virion. It is found in the host cytoplasm. In terms of biological role, oligomerizes into helical capsid to encapsidate the viral genome, protecting it from nucleases and the cellular innate immune response. VP35 binds to and stabilizes monomeric NP, keeping it soluble. Upon virus replication, NP is recruited to bind cooperatively viral genomic RNA and VP35 is released. The encapsidated genomic RNA is termed the nucleocapsid and serves as template for transcription and replication. The nucleocapsid is helical with a pitch of 10.81 NP per turn and a diameter of about 22nm. Each NP binds to six nucleotides of viral genomic RNA, three being exposed to the solvant and three hidden into the nucleocapsid. Also recruits host PPP2R5C phosphatase to dephosphorylate VP30 and thereby promote viral transcription. Upon virion assembly and budding, NP binds to VP24 and possibly host STAU1. In Reston ebolavirus (strain Reston-89) (REBOV), this protein is Nucleoprotein (NP).